The chain runs to 236 residues: Large ribosomal subunit protein uL2 (236 aa).

The segment covering 1-10 (MGHRITTQSR) has biased composition (polar residues). 2 disordered regions span residues 1–20 (MGHRITTQSRGHGGPTYRAP) and 202–236 (GGGGHQHAGRPKTVSRGTSPGRKVGHIAARRTGRR). Basic residues predominate over residues 224–236 (KVGHIAARRTGRR).

The protein belongs to the universal ribosomal protein uL2 family. As to quaternary structure, part of the 50S ribosomal subunit. Forms a bridge to the 30S subunit in the 70S ribosome.

Its function is as follows. One of the primary rRNA binding proteins. Required for association of the 30S and 50S subunits to form the 70S ribosome, for tRNA binding and peptide bond formation. It has been suggested to have peptidyltransferase activity; this is somewhat controversial. Makes several contacts with the 16S rRNA in the 70S ribosome. This chain is Large ribosomal subunit protein uL2, found in Methanospirillum hungatei JF-1 (strain ATCC 27890 / DSM 864 / NBRC 100397 / JF-1).